A 314-amino-acid polypeptide reads, in one-letter code: DNA oxidative demethylase ALKBH2 (314 aa).

Polar residues predominate over residues 1-28 (MTNPLNSTAANRSNQPSSDGISDGQITN). The interval 1 to 75 (MTNPLNSTAA…KRFHYHQDQR (75 aa)) is disordered. A compositionally biased stretch (basic and acidic residues) spans 57 to 75 (NGKDDSDTKKRFHYHQDQR). Substrate-binding positions include Trp132 and 160 to 163 (ALVY). Residues 194–314 (RFNSLLLNRY…RINLTFRLVL (121 aa)) enclose the Fe2OG dioxygenase domain. Residue 201–203 (NRY) coordinates 2-oxoglutarate. Positions 213 and 215 each coordinate Fe cation. Asp216 serves as a coordination point for substrate. The segment at 242-271 (KKDEESSQGKTGDSGPAKKRLKRSSREDQQ) is disordered. His293 is a Fe cation binding site. 2-oxoglutarate is bound by residues Arg305 and 305–311 (RINLTFR).

The protein belongs to the alkB family. The cofactor is Fe(2+). Expressed ubiquitously, including in seedlings, leaves and flowers.

It localises to the nucleus. It carries out the reaction a methylated nucleobase within DNA + 2-oxoglutarate + O2 = a nucleobase within DNA + formaldehyde + succinate + CO2. Functionally, dioxygenase that repairs alkylated DNA containing 1-methyladenine and 1-ethenoadenine by oxidative demethylation. Accepts double-stranded and single-stranded substrates, with a preference for dsDNA over ssDNA. Confers resistance to methylating agents such as methylmethanesulphonate (MMS). This chain is DNA oxidative demethylase ALKBH2 (ALKBH2), found in Arabidopsis thaliana (Mouse-ear cress).